The primary structure comprises 498 residues: ATP synthase subunit beta, chloroplastic (498 aa).

172–179 (GGAGVGKT) serves as a coordination point for ATP.

It belongs to the ATPase alpha/beta chains family. In terms of assembly, F-type ATPases have 2 components, CF(1) - the catalytic core - and CF(0) - the membrane proton channel. CF(1) has five subunits: alpha(3), beta(3), gamma(1), delta(1), epsilon(1). CF(0) has four main subunits: a(1), b(1), b'(1) and c(9-12).

Its subcellular location is the plastid. The protein resides in the chloroplast thylakoid membrane. It carries out the reaction ATP + H2O + 4 H(+)(in) = ADP + phosphate + 5 H(+)(out). In terms of biological role, produces ATP from ADP in the presence of a proton gradient across the membrane. The catalytic sites are hosted primarily by the beta subunits. This chain is ATP synthase subunit beta, chloroplastic, found in Agrostis stolonifera (Creeping bentgrass).